Reading from the N-terminus, the 199-residue chain is MPHKRRNRVHANQRNFTARRVSVAKLSSAPPNVLVESCNGSHADNSSPDSPKAKEGAMTNGKNPEIKLAVPKCNTTVRKQNEAHIISNIKLDMNLNKDSNFIAPQITKKMNFAPNRVVFGVLVPLNVNDSVLVPHNRKPDALKHTSKESESCKAISEPQLADYAEKVDPMIMAVKEPVLHLDWEPGPFDFFGAYRRTYN.

The segment covering methionine 1–alanine 11 has biased composition (basic residues). Disordered regions lie at residues methionine 1–valine 23 and glutamate 36–asparagine 60. Residues cysteine 38 to aspartate 49 show a composition bias toward polar residues.

This sequence belongs to the PPP1R35 family. In terms of assembly, interacts with Ana3; this complex is recruited to daughter centrioles before their conversion to centrosomes.

It is found in the cytoplasm. Its subcellular location is the cytoskeleton. The protein localises to the microtubule organizing center. It localises to the centrosome. The protein resides in the centriole. Its function is as follows. Participates in the later stages of centriole assembly through the interaction with Ana3 leading to the centriole to centrosome conversion in somatic cells. In Drosophila melanogaster (Fruit fly), this protein is Protein PPP1R35 homolog.